A 194-amino-acid polypeptide reads, in one-letter code: MSMITITESAQQHFGKLLAQQPEGTNIRVFVVNPGTQNAECGVSYCPPEAVEASDTKIELELFDAYLDELSLPFLDDAEIDFVTDKMGSQLTLKAPNAKVRKVSDDATLMERVDYAIQTQVNPQLAGHGGNVSLAEITEDGVAILQFGGGCNGCSMVDVTLKEGIEKELLAQFAGELTGVRDVTEHARGEHSYY.

Residues Cys-151 and Cys-154 each coordinate [4Fe-4S] cluster.

The protein belongs to the NfuA family. As to quaternary structure, homodimer. [4Fe-4S] cluster is required as a cofactor.

Functionally, involved in iron-sulfur cluster biogenesis. Binds a 4Fe-4S cluster, can transfer this cluster to apoproteins, and thereby intervenes in the maturation of Fe/S proteins. Could also act as a scaffold/chaperone for damaged Fe/S proteins. The chain is Fe/S biogenesis protein NfuA from Photobacterium profundum (strain SS9).